Consider the following 317-residue polypeptide: Phospho-N-acetylmuramoyl-pentapeptide-transferase (317 aa).

9 helical membrane passes run 4–24 (LIYS…ILIP), 49–69 (TPTM…AVIV), 76–96 (AMIA…DDTL), 112–132 (MILL…NPYI), 147–167 (LGVF…NAVN), 186–206 (FLAL…CAIL), 223–243 (IFMG…VAMI), 246–266 (LPLL…SVIF), and 297–317 (RVVS…FLSL).

The protein belongs to the glycosyltransferase 4 family. MraY subfamily. The cofactor is Mg(2+).

It is found in the cell membrane. It catalyses the reaction UDP-N-acetyl-alpha-D-muramoyl-L-alanyl-gamma-D-glutamyl-meso-2,6-diaminopimeloyl-D-alanyl-D-alanine + di-trans,octa-cis-undecaprenyl phosphate = di-trans,octa-cis-undecaprenyl diphospho-N-acetyl-alpha-D-muramoyl-L-alanyl-D-glutamyl-meso-2,6-diaminopimeloyl-D-alanyl-D-alanine + UMP. It functions in the pathway cell wall biogenesis; peptidoglycan biosynthesis. Catalyzes the initial step of the lipid cycle reactions in the biosynthesis of the cell wall peptidoglycan: transfers peptidoglycan precursor phospho-MurNAc-pentapeptide from UDP-MurNAc-pentapeptide onto the lipid carrier undecaprenyl phosphate, yielding undecaprenyl-pyrophosphoryl-MurNAc-pentapeptide, known as lipid I. The chain is Phospho-N-acetylmuramoyl-pentapeptide-transferase from Clostridium kluyveri (strain NBRC 12016).